Here is a 386-residue protein sequence, read N- to C-terminus: Uroporphyrinogen decarboxylase (386 aa).

The coproporphyrinogen I site is built by Arg44, Ala46, Arg48, Arg57, Asp93, Tyr170, Ser225, and His364. Residues Arg44, Ala46, and Arg48 each coordinate coproporphyrinogen III. Coproporphyrinogen III-binding residues include Asp93, Tyr170, Ser225, and His364.

Belongs to the uroporphyrinogen decarboxylase family. In terms of assembly, homodimer.

Its subcellular location is the cytoplasm. The protein localises to the cytosol. It catalyses the reaction uroporphyrinogen III + 4 H(+) = coproporphyrinogen III + 4 CO2. It functions in the pathway porphyrin-containing compound metabolism; protoporphyrin-IX biosynthesis; coproporphyrinogen-III from 5-aminolevulinate: step 4/4. In terms of biological role, catalyzes the decarboxylation of four acetate groups of uroporphyrinogen-III to yield coproporphyrinogen-III. This is Uroporphyrinogen decarboxylase from Drosophila virilis (Fruit fly).